The following is a 281-amino-acid chain: Tetraspanin-33 (281 aa).

Over 1 to 23 the chain is Cytoplasmic; it reads MGNAKRATQNDEDYTFVSPVVKY. A helical transmembrane segment spans residues 24 to 44; the sequence is LLFFFNMIFWIISLVLISIGV. Topologically, residues 45–62 are extracellular; the sequence is YSRIVKHETALACLTVDP. Residues 63–83 form a helical membrane-spanning segment; it reads ALILMVVGILMFFITFCGCVG. Residues 84-94 lie on the Cytoplasmic side of the membrane; it reads SLRENICLLQT. The helical transmembrane segment at 95-115 threads the bilayer; that stretch reads FCIFLTIMFLLQLLAGVLGFV. Residues 116 to 233 are Extracellular-facing; that stretch reads FSDKARGKVT…DILVNWIHSN (118 aa). 4 disulfides stabilise this stretch: cysteine 154/cysteine 222, cysteine 155/cysteine 187, cysteine 171/cysteine 181, and cysteine 188/cysteine 201. Residue asparagine 170 is glycosylated (N-linked (GlcNAc...) asparagine). Residues 234 to 254 traverse the membrane as a helical segment; the sequence is LFLLGGIALGLTIPQLVGILL. At 255–281 the chain is on the cytoplasmic side; that stretch reads SQVLINQIQDQIKLQNYNQQHRSDPWS.

The protein belongs to the tetraspanin (TM4SF) family. Homodimer; disulfide-linked.

The protein localises to the cell membrane. Its subcellular location is the cell junction. It is found in the adherens junction. It localises to the cytoplasm. In terms of biological role, part of TspanC8 subgroup, composed of 6 members that interact with the transmembrane metalloprotease ADAM10. This interaction is required for ADAM10 exit from the endoplasmic reticulum and for enzymatic maturation and trafficking to the cell surface as well as substrate specificity. Different TspanC8/ADAM10 complexes have distinct substrates. The polypeptide is Tetraspanin-33 (tspan33) (Danio rerio (Zebrafish)).